The following is a 74-amino-acid chain: MPRYYEDKPEGGACAGVKEDLGLCLLQSDCVLKEGKSPRQCLKEGNCKALKYSFFECKRSMLDARSRFRGRKGY.

In terms of domain architecture, CHCH spans 27–65; sequence QSDCVLKEGKSPRQCLKEGNCKALKYSFFECKRSMLDAR. The Cx10C motif signature appears at 30–41; that stretch reads CVLKEGKSPRQC. 2 cysteine pairs are disulfide-bonded: C30–C57 and C41–C47. Phosphoserine is present on S37. Residues 47–57 carry the Cx9C motif motif; it reads CKALKYSFFEC.

The protein belongs to the PET191 family.

Functionally, involved in an early step of the mitochondrial complex IV assembly process. This Bos taurus (Bovine) protein is Cytochrome c oxidase assembly factor 5 (COA5).